Reading from the N-terminus, the 310-residue chain is tRNA pseudouridine synthase B (310 aa).

Catalysis depends on Asp49, which acts as the Nucleophile.

Belongs to the pseudouridine synthase TruB family. Type 1 subfamily.

It catalyses the reaction uridine(55) in tRNA = pseudouridine(55) in tRNA. Functionally, responsible for synthesis of pseudouridine from uracil-55 in the psi GC loop of transfer RNAs. The sequence is that of tRNA pseudouridine synthase B from Rhizobium johnstonii (strain DSM 114642 / LMG 32736 / 3841) (Rhizobium leguminosarum bv. viciae).